The following is a 2027-amino-acid chain: Dedicator of cytokinesis protein 3 (2027 aa).

The SH3 domain maps to 6–67 (EEEKYGVVIC…PANYIHLKKA (62 aa)). The 178-residue stretch at 421–598 (RNDLYLTLEK…ESFFISTQLS (178 aa)) folds into the C2 DOCK-type domain. In terms of domain architecture, DOCKER spans 1225 to 1632 (KSEINKEEMY…LYHEFPGLDK (408 aa)). The residue at position 1655 (S1655) is a Phosphoserine. Disordered regions lie at residues 1672–1695 (GTGR…MMMM), 1731–1768 (SSSQ…SLPD), 1846–1925 (DTPP…DEGL), and 1971–2027 (PPKP…RGEQ). Composition is skewed to low complexity over residues 1676 to 1695 (HSSS…MMMM) and 1731 to 1751 (SSSQ…APSQ). Positions 1752 to 1763 (MITSAPSSTRGS) are enriched in polar residues. Over residues 1877-1899 (GSNSTLSGSASSGVSSLSESNFG) the composition is skewed to low complexity. The short motif at 1967 to 1973 (PPALPPK) is the SH3-binding element. Composition is skewed to basic and acidic residues over residues 1981–1998 (ALEH…ERPR) and 2011–2027 (VKEE…RGEQ).

This sequence belongs to the DOCK family. In terms of assembly, interacts with presenilin proteins PSEN1 and PSEN2. Interacts with CRK. Expressed in brain, spinal cord, pituitary gland, testis. Not expressed in heart, liver, kidney, spleen and lung. In brain, it is highly expressed in the cerebral cortex and hippocampus, while it is absent in other tissues, except in spinal cord. In the cerebral cortex, it is found within the intermediate (III and IV) and deep (V and VI) layers, whereas it is weakly expressed in superficial layer I. It is also abundant in the piriform cortex. Within the hippocampus, it is expressed in the pyramidal neurons of the CA1, CA2, and CA3 regions and the dentate gyrus.

The protein resides in the cytoplasm. Its function is as follows. Potential guanine nucleotide exchange factor (GEF). GEF proteins activate some small GTPases by exchanging bound GDP for free GTP. Its interaction with presenilin proteins as well as its ability to stimulate Tau/MAPT phosphorylation suggest that it may be involved in Alzheimer disease. Ectopic expression in nerve cells decreases the secretion of amyloid-beta APBA1 protein and lowers the rate of cell-substratum adhesion, suggesting that it may affect the function of some small GTPase involved in the regulation of actin cytoskeleton or cell adhesion receptors. This is Dedicator of cytokinesis protein 3 (Dock3) from Mus musculus (Mouse).